Consider the following 242-residue polypeptide: Large ribosomal subunit protein uL1 (242 aa).

The protein belongs to the universal ribosomal protein uL1 family. As to quaternary structure, part of the 50S ribosomal subunit.

Binds directly to 23S rRNA. The L1 stalk is quite mobile in the ribosome, and is involved in E site tRNA release. In terms of biological role, protein L1 is also a translational repressor protein, it controls the translation of the L11 operon by binding to its mRNA. In Streptomyces sp. (strain FRI-5), this protein is Large ribosomal subunit protein uL1.